Here is a 199-residue protein sequence, read N- to C-terminus: MARCKS-related protein (199 aa).

The interval 1-199 (MGSQSSKAPR…PTPAGAEQNE (199 aa)) is disordered. A lipid anchor (N-myristoyl glycine) is attached at glycine 2. At threonine 14 the chain carries Phosphothreonine. Residues 16 to 26 (EEAAGASPAKA) are compositionally biased toward low complexity. 3 positions are modified to phosphoserine: serine 22, serine 36, and serine 48. The segment covering 53 to 64 (GTDEAAGATGDA) has biased composition (low complexity). Serine 71 is subject to Phosphoserine. The segment covering 76–85 (AKGDAPPKET) has biased composition (basic and acidic residues). Threonine 85 bears the Phosphothreonine mark. A compositionally biased stretch (basic residues) spans 86 to 98 (PKKKKKFSFKKPF). The tract at residues 87–110 (KKKKKFSFKKPFKLSGLSFKRNRK) is effector domain involved in lipid-binding and calmodulin-binding. Phosphoserine; by PKC occurs at positions 93, 101, and 104. A Phosphoserine modification is found at serine 119. Serine 120 is subject to Phosphoserine; by MAPK8. At serine 135 the chain carries Phosphoserine. Residue threonine 148 is modified to Phosphothreonine; by MAPK8. Serine 151 bears the Phosphoserine mark. Residues 156 to 167 (AKGAEAGAACKG) show a composition bias toward low complexity. Phosphothreonine is present on threonine 170. A compositionally biased stretch (low complexity) spans 181–199 (STPSGPESGPTPAGAEQNE). Residue threonine 182 is modified to Phosphothreonine; by MAPK8. At threonine 191 the chain carries Phosphothreonine.

Belongs to the MARCKS family. In terms of assembly, binds to filamentous actin (F-actin), but not to monomeric G-actin, independently of its phosphorylation status. Interacts with calmodulin. Post-translationally, phosphorylated. Phosphorylation at Ser-120 and Thr-182 is non-redundantly catalyzed by MAPK8 in vivo. Phosphorylation at Thr-148 is preferentially catalyzed by MAPK8 in vivo, but this modification can also be catalyzed by other kinases in the absence of MAPK8. May be phosphorylated by protein kinase C, which disrupts the interaction with calmodulin.

The protein localises to the cytoplasm. It is found in the cytoskeleton. Its subcellular location is the cell membrane. Its function is as follows. Controls cell movement by regulating actin cytoskeleton homeostasis and filopodium and lamellipodium formation. When unphosphorylated, induces cell migration. When phosphorylated by MAPK8, induces actin bundles formation and stabilization, thereby reducing actin plasticity, hence restricting cell movement, including neuronal migration. May be involved in coupling the protein kinase C and calmodulin signal transduction systems. This Oryctolagus cuniculus (Rabbit) protein is MARCKS-related protein (MARCKSL1).